The following is a 367-amino-acid chain: Histidinol-phosphate aminotransferase (367 aa).

Lysine 221 is modified (N6-(pyridoxal phosphate)lysine).

It belongs to the class-II pyridoxal-phosphate-dependent aminotransferase family. Histidinol-phosphate aminotransferase subfamily. As to quaternary structure, homodimer. Requires pyridoxal 5'-phosphate as cofactor.

The catalysed reaction is L-histidinol phosphate + 2-oxoglutarate = 3-(imidazol-4-yl)-2-oxopropyl phosphate + L-glutamate. It participates in amino-acid biosynthesis; L-histidine biosynthesis; L-histidine from 5-phospho-alpha-D-ribose 1-diphosphate: step 7/9. The polypeptide is Histidinol-phosphate aminotransferase (Erythrobacter litoralis (strain HTCC2594)).